The following is a 349-amino-acid chain: DNA-directed RNA polymerase subunit alpha (349 aa).

The alpha N-terminal domain (alpha-NTD) stretch occupies residues 1-226 (MLIAQRPTLV…GLFGLAQELN (226 aa)). Residues 241–349 (AALAADLALP…GAEFVETEQY (109 aa)) are alpha C-terminal domain (alpha-CTD). Residues 308–349 (LKDSPPGFDPRQAVDTYGTDSYNPAFSDPSDDGAEFVETEQY) form a disordered region. Residues 336 to 349 (PSDDGAEFVETEQY) are compositionally biased toward acidic residues.

The protein belongs to the RNA polymerase alpha chain family. As to quaternary structure, homodimer. The RNAP catalytic core consists of 2 alpha, 1 beta, 1 beta' and 1 omega subunit. When a sigma factor is associated with the core the holoenzyme is formed, which can initiate transcription.

It carries out the reaction RNA(n) + a ribonucleoside 5'-triphosphate = RNA(n+1) + diphosphate. Its function is as follows. DNA-dependent RNA polymerase catalyzes the transcription of DNA into RNA using the four ribonucleoside triphosphates as substrates. The sequence is that of DNA-directed RNA polymerase subunit alpha from Frankia alni (strain DSM 45986 / CECT 9034 / ACN14a).